The sequence spans 206 residues: Pyridoxine/pyridoxamine 5'-phosphate oxidase (206 aa).

Residues 53–58, 68–69, K75, and Q97 each bind FMN; these read RMVLLK and YT. A substrate-binding site is contributed by K58. Residues Y115, R119, and S123 each coordinate substrate. FMN is bound by residues 132–133 and W177; that span reads QS. A substrate-binding site is contributed by 183 to 185; it reads RLH. R187 serves as a coordination point for FMN.

Belongs to the pyridoxamine 5'-phosphate oxidase family. As to quaternary structure, homodimer. FMN is required as a cofactor.

It carries out the reaction pyridoxamine 5'-phosphate + O2 + H2O = pyridoxal 5'-phosphate + H2O2 + NH4(+). The enzyme catalyses pyridoxine 5'-phosphate + O2 = pyridoxal 5'-phosphate + H2O2. It participates in cofactor metabolism; pyridoxal 5'-phosphate salvage; pyridoxal 5'-phosphate from pyridoxamine 5'-phosphate: step 1/1. The protein operates within cofactor metabolism; pyridoxal 5'-phosphate salvage; pyridoxal 5'-phosphate from pyridoxine 5'-phosphate: step 1/1. Its function is as follows. Catalyzes the oxidation of either pyridoxine 5'-phosphate (PNP) or pyridoxamine 5'-phosphate (PMP) into pyridoxal 5'-phosphate (PLP). This Rhizobium johnstonii (strain DSM 114642 / LMG 32736 / 3841) (Rhizobium leguminosarum bv. viciae) protein is Pyridoxine/pyridoxamine 5'-phosphate oxidase.